We begin with the raw amino-acid sequence, 299 residues long: 33 kDa chaperonin (299 aa).

Intrachain disulfides connect Cys239–Cys241 and Cys272–Cys275.

Belongs to the HSP33 family. Under oxidizing conditions two disulfide bonds are formed involving the reactive cysteines. Under reducing conditions zinc is bound to the reactive cysteines and the protein is inactive.

Its subcellular location is the cytoplasm. In terms of biological role, redox regulated molecular chaperone. Protects both thermally unfolding and oxidatively damaged proteins from irreversible aggregation. Plays an important role in the bacterial defense system toward oxidative stress. The polypeptide is 33 kDa chaperonin (Acaryochloris marina (strain MBIC 11017)).